The sequence spans 334 residues: Holliday junction branch migration complex subunit RuvB (334 aa).

A large ATPase domain (RuvB-L) region spans residues 1 to 182 (MDDRMVDQSM…FGVHLRLEYY (182 aa)). Residues leucine 21, arginine 22, glycine 63, lysine 66, threonine 67, threonine 68, 129 to 131 (EDF), arginine 172, tyrosine 182, and arginine 219 contribute to the ATP site. Threonine 67 provides a ligand contact to Mg(2+). Residues 183–253 (QELELKEIIV…TTRASLQLLQ (71 aa)) form a small ATPAse domain (RuvB-S) region. The tract at residues 256–334 (DEGLDYIDHK…HFSKKNGKKE (79 aa)) is head domain (RuvB-H). DNA is bound by residues arginine 292, arginine 311, and arginine 316.

This sequence belongs to the RuvB family. In terms of assembly, homohexamer. Forms an RuvA(8)-RuvB(12)-Holliday junction (HJ) complex. HJ DNA is sandwiched between 2 RuvA tetramers; dsDNA enters through RuvA and exits via RuvB. An RuvB hexamer assembles on each DNA strand where it exits the tetramer. Each RuvB hexamer is contacted by two RuvA subunits (via domain III) on 2 adjacent RuvB subunits; this complex drives branch migration. In the full resolvosome a probable DNA-RuvA(4)-RuvB(12)-RuvC(2) complex forms which resolves the HJ.

Its subcellular location is the cytoplasm. It carries out the reaction ATP + H2O = ADP + phosphate + H(+). In terms of biological role, the RuvA-RuvB-RuvC complex processes Holliday junction (HJ) DNA during genetic recombination and DNA repair, while the RuvA-RuvB complex plays an important role in the rescue of blocked DNA replication forks via replication fork reversal (RFR). RuvA specifically binds to HJ cruciform DNA, conferring on it an open structure. The RuvB hexamer acts as an ATP-dependent pump, pulling dsDNA into and through the RuvAB complex. RuvB forms 2 homohexamers on either side of HJ DNA bound by 1 or 2 RuvA tetramers; 4 subunits per hexamer contact DNA at a time. Coordinated motions by a converter formed by DNA-disengaged RuvB subunits stimulates ATP hydrolysis and nucleotide exchange. Immobilization of the converter enables RuvB to convert the ATP-contained energy into a lever motion, pulling 2 nucleotides of DNA out of the RuvA tetramer per ATP hydrolyzed, thus driving DNA branch migration. The RuvB motors rotate together with the DNA substrate, which together with the progressing nucleotide cycle form the mechanistic basis for DNA recombination by continuous HJ branch migration. Branch migration allows RuvC to scan DNA until it finds its consensus sequence, where it cleaves and resolves cruciform DNA. This Staphylococcus saprophyticus subsp. saprophyticus (strain ATCC 15305 / DSM 20229 / NCIMB 8711 / NCTC 7292 / S-41) protein is Holliday junction branch migration complex subunit RuvB.